The sequence spans 576 residues: Sulfite reductase [NADPH] hemoprotein beta-component (576 aa).

Cys-439, Cys-445, Cys-485, and Cys-489 together coordinate [4Fe-4S] cluster. Cys-489 lines the siroheme pocket.

Belongs to the nitrite and sulfite reductase 4Fe-4S domain family. As to quaternary structure, alpha(8)-beta(8). The alpha component is a flavoprotein, the beta component is a hemoprotein. The cofactor is siroheme. It depends on [4Fe-4S] cluster as a cofactor.

The catalysed reaction is hydrogen sulfide + 3 NADP(+) + 3 H2O = sulfite + 3 NADPH + 4 H(+). It participates in sulfur metabolism; hydrogen sulfide biosynthesis; hydrogen sulfide from sulfite (NADPH route): step 1/1. Its function is as follows. Component of the sulfite reductase complex that catalyzes the 6-electron reduction of sulfite to sulfide. This is one of several activities required for the biosynthesis of L-cysteine from sulfate. This is Sulfite reductase [NADPH] hemoprotein beta-component from Aliivibrio salmonicida (strain LFI1238) (Vibrio salmonicida (strain LFI1238)).